The chain runs to 147 residues: Large ribosomal subunit protein uL15 (147 aa).

The segment covering 1–28 has biased composition (basic residues); that stretch reads MIRRRKKVRKLRGSHTHGWGCKKKHRGG. The tract at residues 1-43 is disordered; it reads MIRRRKKVRKLRGSHTHGWGCKKKHRGGGSKGGRGMAGTGKRN. Over residues 29-38 the composition is skewed to gly residues; the sequence is GSKGGRGMAG.

This sequence belongs to the universal ribosomal protein uL15 family. Part of the 50S ribosomal subunit.

In terms of biological role, binds to the 23S rRNA. This is Large ribosomal subunit protein uL15 from Pyrococcus furiosus (strain ATCC 43587 / DSM 3638 / JCM 8422 / Vc1).